Here is a 33-residue protein sequence, read N- to C-terminus: Photosystem II reaction center protein T (33 aa).

A helical transmembrane segment spans residues 3 to 23 (ALVYTFLLVSTLGIIFFAIFF).

It belongs to the PsbT family. In terms of assembly, PSII is composed of 1 copy each of membrane proteins PsbA, PsbB, PsbC, PsbD, PsbE, PsbF, PsbH, PsbI, PsbJ, PsbK, PsbL, PsbM, PsbT, PsbY, PsbZ, Psb30/Ycf12, at least 3 peripheral proteins of the oxygen-evolving complex and a large number of cofactors. It forms dimeric complexes.

It localises to the plastid. It is found in the chloroplast thylakoid membrane. Functionally, found at the monomer-monomer interface of the photosystem II (PS II) dimer, plays a role in assembly and dimerization of PSII. PSII is a light-driven water plastoquinone oxidoreductase, using light energy to abstract electrons from H(2)O, generating a proton gradient subsequently used for ATP formation. In Arabidopsis thaliana (Mouse-ear cress), this protein is Photosystem II reaction center protein T.